The chain runs to 424 residues: Enolase (424 aa).

A (2R)-2-phosphoglycerate-binding site is contributed by Gln162. The Proton donor role is filled by Glu204. 3 residues coordinate Mg(2+): Asp241, Glu284, and Asp311. (2R)-2-phosphoglycerate-binding residues include Lys336, Arg365, Ser366, and Lys387. The active-site Proton acceptor is Lys336.

Belongs to the enolase family. Mg(2+) is required as a cofactor.

It is found in the cytoplasm. The protein localises to the secreted. The protein resides in the cell surface. The catalysed reaction is (2R)-2-phosphoglycerate = phosphoenolpyruvate + H2O. It functions in the pathway carbohydrate degradation; glycolysis; pyruvate from D-glyceraldehyde 3-phosphate: step 4/5. Catalyzes the reversible conversion of 2-phosphoglycerate (2-PG) into phosphoenolpyruvate (PEP). It is essential for the degradation of carbohydrates via glycolysis. The sequence is that of Enolase from Chelativorans sp. (strain BNC1).